The sequence spans 700 residues: Protein UL29/28 (700 aa).

A disordered region spans residues 1–30 (MSGRRKGCSAATASSSSSSPPSRLPLPGHA). The span at 9 to 21 (SAATASSSSSSPP) shows a compositional bias: low complexity.

It belongs to the herpesviridae US22 family. As to quaternary structure, interacts with UL38 and host HDAC1; these interactions are necessary for the HDAC1 interaction with UL38. Interacts with host MTA2.

Its subcellular location is the virion. It is found in the host nucleus. The protein localises to the host cytoplasm. In terms of biological role, contributes to activation of immediate-early gene expression. This Human cytomegalovirus (strain Merlin) (HHV-5) protein is Protein UL29/28 (UL29).